Reading from the N-terminus, the 184-residue chain is MSIPDTEIPVDDDGYDENGYDRPSKSQVKREMHALLDLGKQLIELSPERLRQLPLEERLYEAIRTAQRTTGREGRRRQIHFVGKLMRAAPADDIRRQLDVWENGSREETAAMHRLEGLRERLIADDEALTELLSRYPGADVQHLRAVIRAARKEAQQNAALLQGQEPQRKQYRALFQALKSLTQ.

Residues 1-27 form a disordered region; the sequence is MSIPDTEIPVDDDGYDENGYDRPSKSQ. The span at 8 to 18 shows a compositional bias: acidic residues; sequence IPVDDDGYDEN.

The protein belongs to the DarP family.

The protein resides in the cytoplasm. Functionally, member of a network of 50S ribosomal subunit biogenesis factors which assembles along the 30S-50S interface, preventing incorrect 23S rRNA structures from forming. Promotes peptidyl transferase center (PTC) maturation. The protein is Dual-action ribosomal maturation protein DarP of Bordetella avium (strain 197N).